The primary structure comprises 159 residues: 16 kDa outer membrane lipoprotein (159 aa).

The signal sequence occupies residues 1–21; the sequence is MNKKIFTLFLVVAASAIFAVS. The N-palmitoyl cysteine moiety is linked to residue Cys22. A lipid anchor (S-diacylglycerol cysteine) is attached at Cys22.

The protein resides in the cell outer membrane. This Brachyspira hyodysenteriae (Treponema hyodysenteriae) protein is 16 kDa outer membrane lipoprotein (smpA).